The sequence spans 143 residues: uncharacterized protein (143 aa).

The N-terminal stretch at Met1–Ala16 is a signal peptide. The helical transmembrane segment at Gly114–Gly134 threads the bilayer.

It localises to the membrane. This is an uncharacterized protein from Mycobacterium tuberculosis (strain CDC 1551 / Oshkosh).